Reading from the N-terminus, the 261-residue chain is Kallikrein 1-related peptidase b3 (261 aa).

The signal sequence occupies residues 1-18 (MWFLILFLALSLGGIDAA). A propeptide spans 19 to 24 (PPVQSR) (activation peptide). Residues 25-107 (IVGGFKCEKN…HPGFNMSLMR (83 aa)) form a segment B1 region. Residues 25 to 258 (IVGGFKCEKN…FTSWIKDTMA (234 aa)) enclose the Peptidase S1 domain. Disulfide bonds link Cys-31–Cys-173, Cys-50–Cys-66, Cys-152–Cys-219, Cys-184–Cys-198, and Cys-209–Cys-234. Catalysis depends on His-65, which acts as the Charge relay system. N-linked (GlcNAc...) asparagine glycosylation occurs at Asn-102. A segment C region spans residues 112 to 164 (FLEYDYSNDLMLLRLSKPADITDTVKPITLPTEEPKLGSTCLASGWGSITPTK). The segment A stretch occupies residues 112 to 261 (FLEYDYSNDL…WIKDTMAKNP (150 aa)). Asp-120 acts as the Charge relay system in catalysis. Residues 165–261 (FQFTDDLYCV…WIKDTMAKNP (97 aa)) are segment B2. The Charge relay system role is filled by Ser-213. Residues His-231 and Glu-236 each contribute to the Zn(2+) site.

It belongs to the peptidase S1 family. Kallikrein subfamily. In terms of assembly, 7S nerve growth factor is composed of two alpha chains, a beta dimer composed of identical chains, and two gamma chains. It depends on Zn(2+) as a cofactor.

The catalysed reaction is Preferential cleavage of Arg-|-Xaa bonds in small molecule substrates. Highly selective action to release kallidin (lysyl-bradykinin) from kininogen involves hydrolysis of Met-|-Xaa or Leu-|-Xaa.. 7S NGF alpha chain stabilizes the 7S complex. The beta dimer promotes neurite growth. The gamma chain is an arginine-specific protease; it may also have plasminogen activator activity, as well as mitogenic activity for chick embryo fibroblasts. In Mus musculus (Mouse), this protein is Kallikrein 1-related peptidase b3 (Klk1b3).